A 542-amino-acid chain; its full sequence is MSKEIKFSSDARTAMMRGIDILADTVKTTLGPKGRNVVLEKSYGSPLITNDGVTIAKEIELEDHFENMGAKLVSEVASKTNDIAGDGTTTATVLTQAIVREGLKNVTAGANPVGIRRGIELAAETAVASIKEMAIPVHDKSAIAQVATVSSRSEKVGEYISDAMERVGSDGVITIEESKGMQTELDVVEGMQFDRGYLSQYMVSNTEKMVAELDNPYILITDKKISNIQEILPLLEQILKTNRPLLIVADDVDGEALPTLVLNKIKGVFNVVAVKAPGFGDRRKAQLEDLAILTGGTVITEELGLDLKDATLEALGQAAKATVDKDHTTIVEGAGSVDAISDRVAIIKAQIEKTTSDFDREKLQERLAKLAGGVAVVKVGAATETELKAMKLLIEDALNATRAAVEEGIVSGGGTALVNAIAALDKLSEEGDIQTGINIVRRALEEPVRQIAANAGYEGSVIIDKLRSEKVGTGFNAATGQWVNMIEEGIVDPAKVTRSALQNAASVAGLILTTEAVVANKPEPAAPAMPPMDPSMGMGGMM.

ATP is bound by residues 29-32 (TLGP), 86-90 (DGTTT), Gly-413, 476-478 (NAA), and Asp-492.

This sequence belongs to the chaperonin (HSP60) family. Forms a cylinder of 14 subunits composed of two heptameric rings stacked back-to-back. Interacts with the co-chaperonin GroES.

The protein resides in the cytoplasm. The enzyme catalyses ATP + H2O + a folded polypeptide = ADP + phosphate + an unfolded polypeptide.. In terms of biological role, together with its co-chaperonin GroES, plays an essential role in assisting protein folding. The GroEL-GroES system forms a nano-cage that allows encapsulation of the non-native substrate proteins and provides a physical environment optimized to promote and accelerate protein folding. This is Chaperonin GroEL from Lactococcus lactis subsp. cremoris (strain SK11).